Here is a 112-residue protein sequence, read N- to C-terminus: K(+)/H(+) antiporter modulator KhtS (112 aa).

Positions 42–64 (YVPMSSYPQETQSAKTPSPGSMH) are disordered. The segment covering 47–60 (SYPQETQSAKTPSP) has biased composition (polar residues).

The protein resides in the cell membrane. Functionally, modulates the activity of the potassium/proton antiporter KhtU. Involved in protection of the cell from methylglyoxal, a toxic by-product of glycolysis. This chain is K(+)/H(+) antiporter modulator KhtS, found in Bacillus subtilis (strain 168).